The following is a 38-amino-acid chain: Beta-galactosidase (38 aa).

Belongs to the glycosyl hydrolase 35 family. As to quaternary structure, heterodimer of a large and a small subunit. Post-translationally, the small subunit is N-glycosylated.

The catalysed reaction is Hydrolysis of terminal non-reducing beta-D-galactose residues in beta-D-galactosides.. Involved in cell wall degradation. Degrades polysaccharides containing beta-(1--&gt;4)-linked galactans, acting as an exo-(1--&gt;4)-beta-D-galactanase. This is Beta-galactosidase from Hordeum vulgare (Barley).